Reading from the N-terminus, the 461-residue chain is Siroheme synthase (461 aa).

A precorrin-2 dehydrogenase /sirohydrochlorin ferrochelatase region spans residues 1 to 204 (MDYFPIFCQL…GDTTQAQQQV (204 aa)). NAD(+) is bound by residues 22–23 (EV) and 43–44 (GR). A Phosphoserine modification is found at Ser-128. The uroporphyrinogen-III C-methyltransferase stretch occupies residues 216 to 461 (GEVTLVGAGP…NWFRCEAASA (246 aa)). Position 225 (Pro-225) interacts with S-adenosyl-L-methionine. Asp-248 (proton acceptor) is an active-site residue. The active-site Proton donor is the Lys-270. S-adenosyl-L-methionine-binding positions include 301-303 (GGD), Ile-306, 331-332 (TA), Met-382, and Gly-411.

This sequence in the N-terminal section; belongs to the precorrin-2 dehydrogenase / sirohydrochlorin ferrochelatase family. In the C-terminal section; belongs to the precorrin methyltransferase family.

The enzyme catalyses uroporphyrinogen III + 2 S-adenosyl-L-methionine = precorrin-2 + 2 S-adenosyl-L-homocysteine + H(+). It carries out the reaction precorrin-2 + NAD(+) = sirohydrochlorin + NADH + 2 H(+). It catalyses the reaction siroheme + 2 H(+) = sirohydrochlorin + Fe(2+). It participates in cofactor biosynthesis; adenosylcobalamin biosynthesis; precorrin-2 from uroporphyrinogen III: step 1/1. It functions in the pathway cofactor biosynthesis; adenosylcobalamin biosynthesis; sirohydrochlorin from precorrin-2: step 1/1. Its pathway is porphyrin-containing compound metabolism; siroheme biosynthesis; precorrin-2 from uroporphyrinogen III: step 1/1. The protein operates within porphyrin-containing compound metabolism; siroheme biosynthesis; siroheme from sirohydrochlorin: step 1/1. It participates in porphyrin-containing compound metabolism; siroheme biosynthesis; sirohydrochlorin from precorrin-2: step 1/1. In terms of biological role, multifunctional enzyme that catalyzes the SAM-dependent methylations of uroporphyrinogen III at position C-2 and C-7 to form precorrin-2 via precorrin-1. Then it catalyzes the NAD-dependent ring dehydrogenation of precorrin-2 to yield sirohydrochlorin. Finally, it catalyzes the ferrochelation of sirohydrochlorin to yield siroheme. The sequence is that of Siroheme synthase from Edwardsiella ictaluri (strain 93-146).